The following is a 78-amino-acid chain: Acyl carrier protein (78 aa).

The Carrier domain maps to alanine 4–lysine 78. O-(pantetheine 4'-phosphoryl)serine is present on serine 39.

Belongs to the acyl carrier protein (ACP) family. 4'-phosphopantetheine is transferred from CoA to a specific serine of apo-ACP by AcpS. This modification is essential for activity because fatty acids are bound in thioester linkage to the sulfhydryl of the prosthetic group.

It localises to the cytoplasm. The protein operates within lipid metabolism; fatty acid biosynthesis. Its function is as follows. Carrier of the growing fatty acid chain in fatty acid biosynthesis. The protein is Acyl carrier protein of Chlorobium limicola (strain DSM 245 / NBRC 103803 / 6330).